Consider the following 308-residue polypeptide: HTH-type transcriptional activator AllS (308 aa).

Residues Phe2–Thr59 enclose the HTH lysR-type domain. A DNA-binding region (H-T-H motif) is located at residues Phe19–Lys38.

Belongs to the LysR transcriptional regulatory family.

Positive regulator essential for the expression of allD operon. Binds to the allD promoter. This chain is HTH-type transcriptional activator AllS (allS), found in Salmonella typhi.